The sequence spans 313 residues: Protein-methionine-sulfoxide reductase catalytic subunit MsrP (313 aa).

Residues 1–44 (MARWRPDMAEREATPEALYLRRRDFLALGAAGAVGLLLPRGARA) constitute a signal peptide (tat-type signal). Mo-molybdopterin is bound by residues N76, 79-80 (YE), C134, T169, N217, R222, and 233-235 (GAK).

The protein belongs to the MsrP family. As to quaternary structure, heterodimer of a catalytic subunit (MsrP) and a heme-binding subunit (MsrQ). The cofactor is Mo-molybdopterin. Predicted to be exported by the Tat system. The position of the signal peptide cleavage has not been experimentally proven.

The protein resides in the periplasm. The enzyme catalyses L-methionyl-[protein] + a quinone + H2O = L-methionyl-(S)-S-oxide-[protein] + a quinol. It catalyses the reaction L-methionyl-[protein] + a quinone + H2O = L-methionyl-(R)-S-oxide-[protein] + a quinol. Functionally, part of the MsrPQ system that repairs oxidized periplasmic proteins containing methionine sulfoxide residues (Met-O), using respiratory chain electrons. Thus protects these proteins from oxidative-stress damage caused by reactive species of oxygen and chlorine generated by the host defense mechanisms. MsrPQ is essential for the maintenance of envelope integrity under bleach stress, rescuing a wide series of structurally unrelated periplasmic proteins from methionine oxidation. The catalytic subunit MsrP is non-stereospecific, being able to reduce both (R-) and (S-) diastereoisomers of methionine sulfoxide. The polypeptide is Protein-methionine-sulfoxide reductase catalytic subunit MsrP (Anaeromyxobacter dehalogenans (strain 2CP-1 / ATCC BAA-258)).